Reading from the N-terminus, the 473-residue chain is Photosystem II CP43 reaction center protein (473 aa).

Positions 1 to 14 (MKTLYSLRRFYPVE) are excised as a propeptide. At T15 the chain carries N-acetylthreonine. T15 bears the Phosphothreonine mark. 5 consecutive transmembrane segments (helical) span residues 69–93 (LFEVAHFVPEKPMYEQGLILLPHLA), 134–155 (LLGPETLEESFPFFGYVWKDRN), 178–200 (KALYFGGVYDTWAPGGGDVRKIT), 255–275 (KPFAWARRALVWSGEAYLSYS), and 291–312 (WFNNTAYPSEFYGPTGPEASQA). E367 provides a ligand contact to [CaMn4O5] cluster. Residues 447 to 471 (RARAAAAGFEKGIDRDFEPVLSMTP) traverse the membrane as a helical segment.

The protein belongs to the PsbB/PsbC family. PsbC subfamily. As to quaternary structure, PSII is composed of 1 copy each of membrane proteins PsbA, PsbB, PsbC, PsbD, PsbE, PsbF, PsbH, PsbI, PsbJ, PsbK, PsbL, PsbM, PsbT, PsbX, PsbY, PsbZ, Psb30/Ycf12, at least 3 peripheral proteins of the oxygen-evolving complex and a large number of cofactors. It forms dimeric complexes. Binds multiple chlorophylls and provides some of the ligands for the Ca-4Mn-5O cluster of the oxygen-evolving complex. It may also provide a ligand for a Cl- that is required for oxygen evolution. PSII binds additional chlorophylls, carotenoids and specific lipids. serves as cofactor.

The protein localises to the plastid. It is found in the chloroplast thylakoid membrane. Functionally, one of the components of the core complex of photosystem II (PSII). It binds chlorophyll and helps catalyze the primary light-induced photochemical processes of PSII. PSII is a light-driven water:plastoquinone oxidoreductase, using light energy to abstract electrons from H(2)O, generating O(2) and a proton gradient subsequently used for ATP formation. This is Photosystem II CP43 reaction center protein from Helianthus annuus (Common sunflower).